Consider the following 409-residue polypeptide: Peptidase T (409 aa).

Zn(2+) is bound at residue His-78. The active site involves Asp-80. Asp-140 serves as a coordination point for Zn(2+). The active-site Proton acceptor is the Glu-174. Zn(2+)-binding residues include Glu-175, Asp-197, and His-379.

Belongs to the peptidase M20B family. The cofactor is Zn(2+).

It localises to the cytoplasm. It catalyses the reaction Release of the N-terminal residue from a tripeptide.. Functionally, cleaves the N-terminal amino acid of tripeptides. The polypeptide is Peptidase T (Aliivibrio salmonicida (strain LFI1238) (Vibrio salmonicida (strain LFI1238))).